The following is a 333-amino-acid chain: Ribonucleoside-diphosphate reductase small chain B (333 aa).

The Fe cation site is built by aspartate 76, glutamate 107, and histidine 110. Residue tyrosine 114 is part of the active site. Glutamate 169, glutamate 203, and histidine 206 together coordinate Fe cation.

The protein belongs to the ribonucleoside diphosphate reductase small chain family. In terms of assembly, heterodimer of a large and a small chain. It depends on Fe cation as a cofactor. As to expression, expressed in roots, rosette leaves, stems and flowers.

Its subcellular location is the cytoplasm. It carries out the reaction a 2'-deoxyribonucleoside 5'-diphosphate + [thioredoxin]-disulfide + H2O = a ribonucleoside 5'-diphosphate + [thioredoxin]-dithiol. Its function is as follows. Provides the precursors necessary for DNA synthesis. Catalyzes the biosynthesis of deoxyribonucleotides from the corresponding ribonucleotides. This is Ribonucleoside-diphosphate reductase small chain B (RNR2B) from Arabidopsis thaliana (Mouse-ear cress).